A 187-amino-acid polypeptide reads, in one-letter code: Auxin-binding protein T85 (187 aa).

The first 20 residues, 1 to 20, serve as a signal peptide directing secretion; sequence MARHVLVVVAVLLFATAEAS. The cysteines at positions 22 and 177 are disulfide-linked. His-78, His-80, and Glu-84 together coordinate Zn(2+). Asn-117 carries N-linked (GlcNAc...) asparagine glycosylation. His-128 contacts Zn(2+). Positions 184–187 match the Prevents secretion from ER motif; sequence KDEL.

In terms of assembly, homodimer.

The protein resides in the endoplasmic reticulum lumen. This is probably a receptor for the plant hormone auxin. This is Auxin-binding protein T85 (T85) from Nicotiana tabacum (Common tobacco).